Consider the following 455-residue polypeptide: Glutamate--tRNA ligase (455 aa).

The short motif at 8–18 (PSPTGYLHIGG) is the 'HIGH' region element. Residues 231–235 (RLSKR) carry the 'KMSKS' region motif. Lysine 234 contacts ATP.

This sequence belongs to the class-I aminoacyl-tRNA synthetase family. Glutamate--tRNA ligase type 1 subfamily. As to quaternary structure, monomer.

It is found in the cytoplasm. It catalyses the reaction tRNA(Glu) + L-glutamate + ATP = L-glutamyl-tRNA(Glu) + AMP + diphosphate. Catalyzes the attachment of glutamate to tRNA(Glu) in a two-step reaction: glutamate is first activated by ATP to form Glu-AMP and then transferred to the acceptor end of tRNA(Glu). This is Glutamate--tRNA ligase from Vesicomyosocius okutanii subsp. Calyptogena okutanii (strain HA).